We begin with the raw amino-acid sequence, 652 residues long: DNA ligase (652 aa).

NAD(+)-binding positions include Asp29–Asp33, Ser78–Leu79, and Glu107. The active-site N6-AMP-lysine intermediate is the Lys109. Arg130, Glu164, Lys278, and Lys302 together coordinate NAD(+). Zn(2+) contacts are provided by Cys395, Cys398, Cys413, and Cys418. Residues Val577 to Leu652 form the BRCT domain.

Belongs to the NAD-dependent DNA ligase family. LigA subfamily. Mg(2+) is required as a cofactor. Requires Mn(2+) as cofactor.

It catalyses the reaction NAD(+) + (deoxyribonucleotide)n-3'-hydroxyl + 5'-phospho-(deoxyribonucleotide)m = (deoxyribonucleotide)n+m + AMP + beta-nicotinamide D-nucleotide.. In terms of biological role, DNA ligase that catalyzes the formation of phosphodiester linkages between 5'-phosphoryl and 3'-hydroxyl groups in double-stranded DNA using NAD as a coenzyme and as the energy source for the reaction. It is essential for DNA replication and repair of damaged DNA. In Streptococcus pneumoniae (strain CGSP14), this protein is DNA ligase.